Here is a 25-residue protein sequence, read N- to C-terminus: GLWDDLKAAAKKVVSSLASAAIEKL.

As to expression, expressed by the skin glands of male frogs.

The protein localises to the secreted. Stimulates aggressive behavior in male frogs. No effect on female frogs. The sequence is that of Aggression-stimulating peptide from Leptodactylus fallax (Mountain chicken frog).